A 275-amino-acid polypeptide reads, in one-letter code: 4-hydroxy-tetrahydrodipicolinate reductase (275 aa).

NAD(+) contacts are provided by residues 13 to 18 (GAAGKM) and 108 to 110 (GTT). The Proton donor/acceptor role is filled by His164. His165 is a binding site for (S)-2,3,4,5-tetrahydrodipicolinate. Catalysis depends on Lys168, which acts as the Proton donor. 174-175 (GT) is a (S)-2,3,4,5-tetrahydrodipicolinate binding site.

It belongs to the DapB family.

The protein localises to the cytoplasm. The enzyme catalyses (S)-2,3,4,5-tetrahydrodipicolinate + NAD(+) + H2O = (2S,4S)-4-hydroxy-2,3,4,5-tetrahydrodipicolinate + NADH + H(+). The catalysed reaction is (S)-2,3,4,5-tetrahydrodipicolinate + NADP(+) + H2O = (2S,4S)-4-hydroxy-2,3,4,5-tetrahydrodipicolinate + NADPH + H(+). It participates in amino-acid biosynthesis; L-lysine biosynthesis via DAP pathway; (S)-tetrahydrodipicolinate from L-aspartate: step 4/4. Functionally, catalyzes the conversion of 4-hydroxy-tetrahydrodipicolinate (HTPA) to tetrahydrodipicolinate. The chain is 4-hydroxy-tetrahydrodipicolinate reductase from Rippkaea orientalis (strain PCC 8801 / RF-1) (Cyanothece sp. (strain PCC 8801)).